Reading from the N-terminus, the 560-residue chain is Glucose-6-phosphate isomerase, cytosolic (560 aa).

Ala2 is subject to N-acetylalanine. The active-site Proton donor is the Glu361. Residues His392 and Lys517 contribute to the active site.

The protein belongs to the GPI family. As to quaternary structure, homodimer.

Its subcellular location is the cytoplasm. The enzyme catalyses alpha-D-glucose 6-phosphate = beta-D-fructose 6-phosphate. Its pathway is carbohydrate degradation; glycolysis; D-glyceraldehyde 3-phosphate and glycerone phosphate from D-glucose: step 2/4. The polypeptide is Glucose-6-phosphate isomerase, cytosolic (PGIC) (Arabidopsis lyrata subsp. petraea (Northern rock-cress)).